A 179-amino-acid chain; its full sequence is Macro domain-containing protein XCC3184 (179 aa).

In terms of domain architecture, Macro spans 1–175 (MRIEVWQGDI…AYHQALATQE (175 aa)).

Belongs to the MacroD-type family.

In Xanthomonas campestris pv. campestris (strain ATCC 33913 / DSM 3586 / NCPPB 528 / LMG 568 / P 25), this protein is Macro domain-containing protein XCC3184.